Here is a 186-residue protein sequence, read N- to C-terminus: MASSAASSVRPPRPKKEPQALIIPKNAAEEQKLKLERLMKNPDKAVPIPEKMSEWAPRPPPEFVRDVMGSSAGAGSGEFHVYRHLRRREYQRQDYMDAMAEKQKLEAEFQKRLERNKIAAEEQTAKRRKKRQKLKEKKLLAKKMKLEQKKQSEASSETQEQPSSGSEEASGTEDEEEDAPSFITGR.

The segment at 1–50 is interaction with EIF2AK2; that stretch reads MASSAASSVRPPRPKKEPQALIIPKNAAEEQKLKLERLMKNPDKAVPIPE. 2 disordered regions span residues 39–61 and 119–186; these read MKNP…RPPP and AAEE…ITGR. Positions 51–143 are required for RNA-binding; the sequence is KMSEWAPRPP…LKEKKLLAKK (93 aa). The stretch at 86–153 forms a coiled coil; it reads RRREYQRQDY…MKLEQKKQSE (68 aa). A required for nuclear localization region spans residues 126–138; that stretch reads KRRKKRQKLKEKK. The segment covering 126–143 has biased composition (basic residues); that stretch reads KRRKKRQKLKEKKLLAKK. Over residues 153 to 162 the composition is skewed to polar residues; it reads EASSETQEQP. Over residues 170 to 179 the composition is skewed to acidic residues; sequence SGTEDEEEDA.

It belongs to the PRKRIP1 family. As to quaternary structure, component of the pre-catalytic and post-catalytic spliceosome complexes. Interacts with EIF2AK2.

Its subcellular location is the nucleus. It is found in the nucleolus. Required for pre-mRNA splicing as component of the spliceosome. Binds double-stranded RNA. Inhibits EIF2AK2 kinase activity. The chain is PRKR-interacting protein 1 (PRKRIP1) from Bos taurus (Bovine).